Consider the following 556-residue polypeptide: Threonylcarbamoyladenosine tRNA methylthiotransferase (556 aa).

The interval 17 to 57 (SATDPKPHDRQSARKNIVPRARKRNKNNIQEEEPPADSTIP) is disordered. Positions 60 to 168 (QKIWIRTWGC…VVEVVEETIK (109 aa)) constitute an MTTase N-terminal domain. [4Fe-4S] cluster is bound by residues Cys-69, Cys-105, Cys-134, Cys-210, Cys-214, and Cys-217. Positions 196–427 (RKNPLIEIIS…QLFHSYDPYD (232 aa)) constitute a Radical SAM core domain. Positions 427-489 (DHKIGQKQQV…KHFMKGQPVQ (63 aa)) constitute a TRAM domain. A helical membrane pass occupies residues 536–556 (VFLFLTALLAAVIAFVGTKLV).

This sequence belongs to the methylthiotransferase family. CDKAL1 subfamily. Requires [4Fe-4S] cluster as cofactor.

It is found in the endoplasmic reticulum membrane. It catalyses the reaction N(6)-L-threonylcarbamoyladenosine(37) in tRNA + (sulfur carrier)-SH + AH2 + 2 S-adenosyl-L-methionine = 2-methylsulfanyl-N(6)-L-threonylcarbamoyladenosine(37) in tRNA + (sulfur carrier)-H + 5'-deoxyadenosine + L-methionine + A + S-adenosyl-L-homocysteine + 2 H(+). Functionally, catalyzes the methylthiolation of N6-threonylcarbamoyladenosine (t(6)A), leading to the formation of 2-methylthio-N6-threonylcarbamoyladenosine (ms(2)t(6)A) at position 37 in tRNAs that read codons beginning with adenine. The sequence is that of Threonylcarbamoyladenosine tRNA methylthiotransferase (cdkal1) from Xenopus laevis (African clawed frog).